Consider the following 260-residue polypeptide: Cytosolic Fe-S cluster assembly factor Nubp2 homolog (260 aa).

14-21 (GKGGVGKS) provides a ligand contact to ATP. [4Fe-4S] cluster-binding residues include C188 and C191.

This sequence belongs to the Mrp/NBP35 ATP-binding proteins family. NUBP2/CFD1 subfamily. In terms of assembly, heterotetramer of 2 Nubp1 and 2 Nubp2 chains. Requires [4Fe-4S] cluster as cofactor.

It is found in the cytoplasm. Functionally, component of the cytosolic iron-sulfur (Fe/S) protein assembly (CIA) machinery. Required for maturation of extramitochondrial Fe-S proteins. The Nubp1-Nubp2 heterotetramer forms a Fe-S scaffold complex, mediating the de novo assembly of an Fe-S cluster and its transfer to target apoproteins. The protein is Cytosolic Fe-S cluster assembly factor Nubp2 homolog of Drosophila simulans (Fruit fly).